The sequence spans 329 residues: Probable carboxylesterase 8 (329 aa).

The Involved in the stabilization of the negatively charged intermediate by the formation of the oxyanion hole signature appears at 73–75; that stretch reads HGG. Catalysis depends on residues serine 161, aspartate 264, and histidine 294.

Belongs to the 'GDXG' lipolytic enzyme family. Expressed in leaves, stems, flowers and siliques.

The enzyme catalyses a carboxylic ester + H2O = an alcohol + a carboxylate + H(+). Carboxylesterase acting on esters with varying acyl chain length. This Arabidopsis thaliana (Mouse-ear cress) protein is Probable carboxylesterase 8 (CXE8).